The chain runs to 231 residues: 7-cyano-7-deazaguanine synthase (231 aa).

8-18 (FSGGQDSTTCL) lines the ATP pocket. 4 residues coordinate Zn(2+): cysteine 188, cysteine 197, cysteine 200, and cysteine 203.

It belongs to the QueC family. The cofactor is Zn(2+).

The enzyme catalyses 7-carboxy-7-deazaguanine + NH4(+) + ATP = 7-cyano-7-deazaguanine + ADP + phosphate + H2O + H(+). The protein operates within purine metabolism; 7-cyano-7-deazaguanine biosynthesis. In terms of biological role, catalyzes the ATP-dependent conversion of 7-carboxy-7-deazaguanine (CDG) to 7-cyano-7-deazaguanine (preQ(0)). This chain is 7-cyano-7-deazaguanine synthase, found in Escherichia fergusonii (strain ATCC 35469 / DSM 13698 / CCUG 18766 / IAM 14443 / JCM 21226 / LMG 7866 / NBRC 102419 / NCTC 12128 / CDC 0568-73).